Consider the following 146-residue polypeptide: Transcriptional regulator MraZ (146 aa).

SpoVT-AbrB domains are found at residues threonine 9 to valine 55 and alanine 81 to arginine 124.

It belongs to the MraZ family. Forms oligomers.

It is found in the cytoplasm. It localises to the nucleoid. The polypeptide is Transcriptional regulator MraZ (Leptothrix cholodnii (strain ATCC 51168 / LMG 8142 / SP-6) (Leptothrix discophora (strain SP-6))).